The sequence spans 670 residues: MGETEKRIATHGVRCFSKIKMFLLALTCAYVSKSLSGIYMNSMLTQIERQFDIPTSIVGLINGSFEIGNLLLIILVSYFGTKLHRPIMIGIGCVIMGLGCFLMSLPHFLMGRYEYETTISPTSNLSSNSFLCMENRTQTLKPTQDPAECVKEMKSLMWIYVLVGNIIRGIGETPIMPLGISYIEDFAKSENSPLYIGILESGKMIGPIVGLLLGSFCARIYVDTGSVNTDDLTITPTDTRWVGAWWIGFLVCAGVNILTSIPFFFFPKTLPKEGLQDNVARTENDKEEKHREKAKEENRGITKDFLPFMKSLSCNPIYMLLILTSVLQINAFINMFTFLPKYLEQQYGKSTSEVVLLIGVCNLPPICIGYLLIGFIMKKFRITVKKAAYMAFCLSLFEYLLSYFHFMISCDNFQVAGLTTSYEGVQHPLYVENKVLADCNTRCSCLTNTWDPVCGDNGLSYMSACLAGCEKSVGMGTHMVFQNCSCIQSSGNSSAVLGLCKKGPECANKLQYFLIMSVIGSFIYSITAIPGYMVLLRCIKSEEKSLGIGLHAFCTRIFAGIPAPIYFGALIDRTCLHWGTLKCGEPGACRIYNINNFRRIYLVLPAALRGSSYLPAFFILILMRKFQLPGEMYSSETELADMKQTVKKSECTDVHGIPKVENDGELKTKL.

At 1–20 (MGETEKRIATHGVRCFSKIK) the chain is on the cytoplasmic side. Residues 21–40 (MFLLALTCAYVSKSLSGIYM) traverse the membrane as a helical segment. The Extracellular portion of the chain corresponds to 41–59 (NSMLTQIERQFDIPTSIVG). The chain crosses the membrane as a helical span at residues 60-80 (LINGSFEIGNLLLIILVSYFG). Residues 81–86 (TKLHRP) are Cytoplasmic-facing. A helical transmembrane segment spans residues 87–111 (IMIGIGCVIMGLGCFLMSLPHFLMG). The Extracellular portion of the chain corresponds to 112–155 (RYEYETTISPTSNLSSNSFLCMENRTQTLKPTQDPAECVKEMKS). Asparagine 124 and asparagine 135 each carry an N-linked (GlcNAc...) asparagine glycan. Residues 156 to 184 (LMWIYVLVGNIIRGIGETPIMPLGISYIE) traverse the membrane as a helical segment. At 185 to 203 (DFAKSENSPLYIGILESGK) the chain is on the cytoplasmic side. A helical transmembrane segment spans residues 204–224 (MIGPIVGLLLGSFCARIYVDT). Residues 225–242 (GSVNTDDLTITPTDTRWV) are Extracellular-facing. Residues 243–267 (GAWWIGFLVCAGVNILTSIPFFFFP) form a helical membrane-spanning segment. The Cytoplasmic segment spans residues 268–311 (KTLPKEGLQDNVARTENDKEEKHREKAKEENRGITKDFLPFMKS). Residues 312 to 333 (LSCNPIYMLLILTSVLQINAFI) form a helical membrane-spanning segment. At 334–353 (NMFTFLPKYLEQQYGKSTSE) the chain is on the extracellular side. Residues 354 to 377 (VVLLIGVCNLPPICIGYLLIGFIM) traverse the membrane as a helical segment. Topologically, residues 378-381 (KKFR) are cytoplasmic. Residues 382–405 (ITVKKAAYMAFCLSLFEYLLSYFH) form a helical membrane-spanning segment. The Extracellular segment spans residues 406 to 513 (FMISCDNFQV…PECANKLQYF (108 aa)). The Kazal-like domain maps to 433-488 (NKVLADCNTRCSCLTNTWDPVCGDNGLSYMSACLAGCEKSVGMGTHMVFQNCSCIQ). Cystine bridges form between cysteine 439/cysteine 469, cysteine 445/cysteine 465, and cysteine 454/cysteine 486. 2 N-linked (GlcNAc...) asparagine glycosylation sites follow: asparagine 483 and asparagine 492. The helical transmembrane segment at 514–536 (LIMSVIGSFIYSITAIPGYMVLL) threads the bilayer. The Cytoplasmic portion of the chain corresponds to 537-545 (RCIKSEEKS). Residues 546-571 (LGIGLHAFCTRIFAGIPAPIYFGALI) traverse the membrane as a helical segment. Over 572-605 (DRTCLHWGTLKCGEPGACRIYNINNFRRIYLVLP) the chain is Extracellular. A helical transmembrane segment spans residues 606 to 623 (AALRGSSYLPAFFILILM). The Cytoplasmic segment spans residues 624 to 670 (RKFQLPGEMYSSETELADMKQTVKKSECTDVHGIPKVENDGELKTKL).

This sequence belongs to the organo anion transporter (TC 2.A.60) family. Expressed in brain, choroid plexus and lung, but not in liver or kidney.

It is found in the cell membrane. It localises to the basal cell membrane. The enzyme catalyses taurocholate(out) = taurocholate(in). The catalysed reaction is glycocholate(out) = glycocholate(in). It catalyses the reaction taurochenodeoxycholate(out) = taurochenodeoxycholate(in). It carries out the reaction tauroursodeoxycholate(out) = tauroursodeoxycholate(in). The enzyme catalyses 3,3',5'-triiodo-L-thyronine(out) = 3,3',5'-triiodo-L-thyronine(in). The catalysed reaction is L-thyroxine(out) = L-thyroxine(in). It catalyses the reaction taurodeoxycholate(out) = taurodeoxycholate(in). It carries out the reaction glycodeoxycholate(out) = glycodeoxycholate(in). The enzyme catalyses glycochenodeoxycholate(out) = glycochenodeoxycholate(in). The catalysed reaction is glycoursodeoxycholate(out) = glycoursodeoxycholate(in). It catalyses the reaction estrone 3-sulfate(out) = estrone 3-sulfate(in). It carries out the reaction prostaglandin E2(out) = prostaglandin E2(in). The enzyme catalyses substance P(out) = substance P(in). In terms of biological role, na(+)-independent transporter that mediates the cellular uptake of a broad range of organic anions such as the endogenous bile salts cholate and deoxycholate, either in their unconjugated or conjugated forms (taurocholate and glycocholate), estrone 3-sulfate and prostaglandin E2, at the plasma membrane. Responsible for intestinal absorption of bile acids. Capable of thyroid hormone transport (both T3 or 3,3',5'-triiodo-L-thyronine, and T4 or L-tyroxine). Plays roles in blood-brain and -cerebrospinal fluid barrier transport of organic anions and signal mediators, and in hormone uptake by neural cells. May also play a role in the reuptake of neuropeptides such as substance P/TAC1 and vasoactive intestinal peptide/VIP released from retinal neurons. Shows a pH-sensitive substrate specificity which may be ascribed to the protonation state of the binding site and leads to a stimulation of substrate transport in an acidic microenvironment. Hydrogencarbonate/HCO3(-) acts as the probable counteranion that exchanges for organic anions. May contribute to regulate the transport of organic compounds in testis across the blood-testis-barrier. The protein is Solute carrier organic anion transporter family member 1A5 (Slco1a5) of Mus musculus (Mouse).